The chain runs to 74 residues: Progonadoliberin-3 (74 aa).

An N-terminal signal peptide occupies residues 1–15 (VQVVVLALVAQVTLS). The residue at position 16 (glutamine 16) is a Pyrrolidone carboxylic acid. Glycine amide is present on glycine 25.

Belongs to the GnRH family.

It is found in the secreted. Stimulates the secretion of gonadotropins. This is Progonadoliberin-3 (gnrh3) from Oncorhynchus mykiss (Rainbow trout).